We begin with the raw amino-acid sequence, 164 residues long: Pyruvoyl-dependent arginine decarboxylase (164 aa).

Residue Ser52 is modified to Pyruvic acid (Ser).

This sequence belongs to the PdaD family. Requires pyruvate as cofactor.

The enzyme catalyses L-arginine + H(+) = agmatine + CO2. The polypeptide is Pyruvoyl-dependent arginine decarboxylase (Methanococcus maripaludis (strain C5 / ATCC BAA-1333)).